Reading from the N-terminus, the 256-residue chain is Ribonuclease HII (256 aa).

One can recognise an RNase H type-2 domain in the interval 72–256 (QYVAGIDEVG…TFRPVPDYVN (185 aa)). Residues aspartate 78, glutamate 79, and aspartate 170 each coordinate a divalent metal cation.

Belongs to the RNase HII family. The cofactor is Mn(2+). Mg(2+) is required as a cofactor.

It is found in the cytoplasm. The catalysed reaction is Endonucleolytic cleavage to 5'-phosphomonoester.. Endonuclease that specifically degrades the RNA of RNA-DNA hybrids. The protein is Ribonuclease HII of Limosilactobacillus fermentum (strain NBRC 3956 / LMG 18251) (Lactobacillus fermentum).